The primary structure comprises 283 residues: Phosphatidylglycerol--prolipoprotein diacylglyceryl transferase (283 aa).

4 helical membrane-spanning segments follow: residues 17 to 37, 56 to 76, 92 to 112, and 117 to 137; these read LAVR…TFLG, FLTW…VLFY, WEGG…IWLF, and GIGF…GLAS. Residue Arg-139 participates in a 1,2-diacyl-sn-glycero-3-phospho-(1'-sn-glycerol) binding. 3 helical membrane passes run 194–214, 222–242, and 255–275; these read PSQL…VWLF, GQVA…AEFA, and GLSM…VGFV.

The protein belongs to the Lgt family.

It localises to the cell inner membrane. It catalyses the reaction L-cysteinyl-[prolipoprotein] + a 1,2-diacyl-sn-glycero-3-phospho-(1'-sn-glycerol) = an S-1,2-diacyl-sn-glyceryl-L-cysteinyl-[prolipoprotein] + sn-glycerol 1-phosphate + H(+). Its pathway is protein modification; lipoprotein biosynthesis (diacylglyceryl transfer). Functionally, catalyzes the transfer of the diacylglyceryl group from phosphatidylglycerol to the sulfhydryl group of the N-terminal cysteine of a prolipoprotein, the first step in the formation of mature lipoproteins. This chain is Phosphatidylglycerol--prolipoprotein diacylglyceryl transferase, found in Neisseria meningitidis serogroup C / serotype 2a (strain ATCC 700532 / DSM 15464 / FAM18).